A 145-amino-acid polypeptide reads, in one-letter code: Anaerobic nitrite reductase NSHB5 (145 aa).

The region spanning glycine 2–lysine 142 is the Globin domain. The Homodimerization signature appears at glutamate 35–alanine 39. Serine 45, histidine 59, lysine 61, arginine 84, threonine 88, and histidine 89 together coordinate heme b. The Homodimerization motif lies at aspartate 96 to aspartate 108.

The protein belongs to the plant globin family. In terms of assembly, homodimer. It depends on heme b as a cofactor. Expressed in embryonic (embryos, coleoptiles and seminal roots) and vegetative (leaves and roots) organs.

The protein resides in the cytoplasm. It localises to the nucleus. The catalysed reaction is Fe(III)-heme b-[protein] + nitric oxide + H2O = Fe(II)-heme b-[protein] + nitrite + 2 H(+). Phytoglobin that reduces nitrite to nitric oxide under anoxic conditions (e.g. during flooding or in waterlogged soil). May not function as an oxygen storage or transport protein. Has an unusually high affinity for O(2) through an hexacoordinate heme iron because of a very low dissociation constant. This is Anaerobic nitrite reductase NSHB5 from Oryza sativa subsp. indica (Rice).